Consider the following 133-residue polypeptide: Pheromone-regulated membrane protein 3 (133 aa).

Residues 1-104 (MTAMKEDNAA…SKVQRENKGS (104 aa)) lie on the Nuclear side of the membrane. Residues 36–100 (ADGFVINKAK…DASESKVQRE (65 aa)) form a disordered region. The Bipartite nuclear localization signal motif lies at 69 to 75 (GRVRKHK). Basic and acidic residues predominate over residues 90-100 (KDASESKVQRE). The helical transmembrane segment at 105–127 (FYQGAIFGSFLGAAVTTVLSNLA) threads the bilayer. Topologically, residues 128-133 (VKALQN) are perinuclear space.

In terms of assembly, interacts with KAR5.

The protein resides in the nucleus outer membrane. It is found in the cytoplasm. It localises to the cytoskeleton. Its subcellular location is the microtubule organizing center. The protein localises to the spindle pole body. Functionally, required for the fusion of nuclear envelopes during mating, ensuring proper karyogamy. Plays a role in the initiation of outer nuclear envelope fusion. In Saccharomyces cerevisiae (strain ATCC 204508 / S288c) (Baker's yeast), this protein is Pheromone-regulated membrane protein 3 (PRM3).